The primary structure comprises 236 residues: tRNA1(Val) (adenine(37)-N6)-methyltransferase (236 aa).

Belongs to the methyltransferase superfamily. tRNA (adenine-N(6)-)-methyltransferase family.

It localises to the cytoplasm. The catalysed reaction is adenosine(37) in tRNA1(Val) + S-adenosyl-L-methionine = N(6)-methyladenosine(37) in tRNA1(Val) + S-adenosyl-L-homocysteine + H(+). Functionally, specifically methylates the adenine in position 37 of tRNA(1)(Val) (anticodon cmo5UAC). The sequence is that of tRNA1(Val) (adenine(37)-N6)-methyltransferase from Histophilus somni (strain 2336) (Haemophilus somnus).